The chain runs to 374 residues: tRNA-specific 2-thiouridylase MnmA (374 aa).

Residues 17-24 and methionine 43 contribute to the ATP site; that span reads GMSGGVDS. The tract at residues 103-105 is interaction with target base in tRNA; that stretch reads NPD. The Nucleophile role is filled by cysteine 108. A disulfide bridge connects residues cysteine 108 and cysteine 204. Glycine 132 serves as a coordination point for ATP. Residues 154-156 form an interaction with tRNA region; it reads KDQ. Cysteine 204 functions as the Cysteine persulfide intermediate in the catalytic mechanism. The interaction with tRNA stretch occupies residues 316–317; the sequence is RY.

The protein belongs to the MnmA/TRMU family.

It is found in the cytoplasm. It carries out the reaction S-sulfanyl-L-cysteinyl-[protein] + uridine(34) in tRNA + AH2 + ATP = 2-thiouridine(34) in tRNA + L-cysteinyl-[protein] + A + AMP + diphosphate + H(+). In terms of biological role, catalyzes the 2-thiolation of uridine at the wobble position (U34) of tRNA, leading to the formation of s(2)U34. This chain is tRNA-specific 2-thiouridylase MnmA, found in Pseudomonas entomophila (strain L48).